Reading from the N-terminus, the 187-residue chain is Large ribosomal subunit protein bL17 (187 aa).

The disordered stretch occupies residues 122–187 (PKVRSSRTST…EADAAEKSDK (66 aa)). Residues 127-144 (SRTSTATAPVAAAPVAEA) show a composition bias toward low complexity. Positions 145 to 157 (PAEESDVPVEETD) are enriched in acidic residues. The span at 167–176 (AETTDAAAAE) shows a compositional bias: low complexity.

Belongs to the bacterial ribosomal protein bL17 family. As to quaternary structure, part of the 50S ribosomal subunit. Contacts protein L32.

This Clavibacter sepedonicus (Clavibacter michiganensis subsp. sepedonicus) protein is Large ribosomal subunit protein bL17.